A 153-amino-acid polypeptide reads, in one-letter code: Holo-[acyl-carrier-protein] synthase (153 aa).

Positions 24 and 78 each coordinate Mg(2+).

It belongs to the P-Pant transferase superfamily. AcpS family. The cofactor is Mg(2+).

It is found in the cytoplasm. The enzyme catalyses apo-[ACP] + CoA = holo-[ACP] + adenosine 3',5'-bisphosphate + H(+). Transfers the 4'-phosphopantetheine moiety from coenzyme A to a Ser of acyl-carrier-protein. This is Holo-[acyl-carrier-protein] synthase from Bordetella parapertussis (strain 12822 / ATCC BAA-587 / NCTC 13253).